The following is a 79-amino-acid chain: Cyclin-dependent kinases regulatory subunit 2 (79 aa).

Belongs to the CKS family. In terms of assembly, forms a homohexamer that can probably bind six kinase subunits.

In terms of biological role, binds to the catalytic subunit of the cyclin dependent kinases and is essential for their biological function. The protein is Cyclin-dependent kinases regulatory subunit 2 (cks2) of Xenopus laevis (African clawed frog).